The following is a 318-amino-acid chain: 2-oxoacid:ferredoxin oxidoreductase 1, subunit beta (318 aa).

[4Fe-4S] cluster is bound by residues Cys18, Cys21, and Cys52. Thiamine diphosphate is bound by residues 50-53 and His69; that span reads IGCS. Position 94 (Asp94) interacts with Mg(2+). A thiamine diphosphate-binding site is contributed by 95–96; sequence GD. The Mg(2+) site is built by Asn122 and Val124. Residue 126–127 participates in thiamine diphosphate binding; that stretch reads GL. Cys201 contributes to the [4Fe-4S] cluster binding site.

Heterodimer composed of an alpha and a beta subunit. Requires [4Fe-4S] cluster as cofactor. The cofactor is thiamine diphosphate. It depends on Mg(2+) as a cofactor.

It catalyses the reaction a 2-oxocarboxylate + 2 oxidized [2Fe-2S]-[ferredoxin] + CoA = an acyl-CoA + 2 reduced [2Fe-2S]-[ferredoxin] + CO2 + H(+). Catalyzes the coenzyme A-dependent oxidative decarboxylation of different 2-oxoacids such as pyruvate, 2-oxobutyrate and glyoxylate to form their CoA derivatives. The chain is 2-oxoacid:ferredoxin oxidoreductase 1, subunit beta from Aeropyrum pernix (strain ATCC 700893 / DSM 11879 / JCM 9820 / NBRC 100138 / K1).